A 700-amino-acid polypeptide reads, in one-letter code: Polyribonucleotide nucleotidyltransferase (700 aa).

The Mg(2+) site is built by aspartate 491 and aspartate 497. A KH domain is found at 558 to 617; sequence PNYAVIEINPDKIRDVIGKGGATIRQLTEETGAVIDIDDAGTIRIFGENKAATKAAIAKI. The S1 motif domain maps to 627-695; it reads GKTYEGTVAR…NRGRIKLTMK (69 aa).

This sequence belongs to the polyribonucleotide nucleotidyltransferase family. In terms of assembly, component of the RNA degradosome, which is a multiprotein complex involved in RNA processing and mRNA degradation. Mg(2+) serves as cofactor.

The protein localises to the cytoplasm. It catalyses the reaction RNA(n+1) + phosphate = RNA(n) + a ribonucleoside 5'-diphosphate. Its function is as follows. Involved in mRNA degradation. Catalyzes the phosphorolysis of single-stranded polyribonucleotides processively in the 3'- to 5'-direction. This is Polyribonucleotide nucleotidyltransferase from Psychrobacter arcticus (strain DSM 17307 / VKM B-2377 / 273-4).